Reading from the N-terminus, the 471-residue chain is Casein kinase 1-like protein 9 (471 aa).

The Protein kinase domain maps to 9–278; it reads FKLGRKIGSG…LKRLFRDLFI (270 aa). ATP-binding positions include 15 to 23 and Lys38; that span reads IGSGSFGEL. The Proton acceptor role is filled by Asp128. Positions 300-471 are disordered; sequence SSSGSSSRTR…RSLELLTLRK (172 aa). A compositionally biased stretch (basic and acidic residues) spans 325 to 339; it reads EKQERIAGKETRENR. Residues 385 to 430 are compositionally biased toward low complexity; sequence SSRYGSSSRRAIPSSSRPSSAGGPSDSRSSSRLVTSTGGVGTVSNR. The segment covering 431–449 has biased composition (polar residues); the sequence is ASTSQRIQAGNESRTSSFS. The span at 454–464 shows a compositional bias: basic and acidic residues; sequence NTREDPLRRSL.

This sequence belongs to the protein kinase superfamily. CK1 Ser/Thr protein kinase family. Casein kinase I subfamily. As to quaternary structure, monomer. In terms of processing, autophosphorylated on serine, threonine and tyrosine residues. Expressed in leaves, stems and flowers.

It is found in the cytoplasm. The protein resides in the nucleus. It catalyses the reaction L-seryl-[protein] + ATP = O-phospho-L-seryl-[protein] + ADP + H(+). The catalysed reaction is L-threonyl-[protein] + ATP = O-phospho-L-threonyl-[protein] + ADP + H(+). In terms of biological role, casein kinases are operationally defined by their preferential utilization of acidic proteins such as caseins as substrates. Can phosphorylate casein on serine and threonine residues, and poly(Glu,Tyr) in vitro. This is Casein kinase 1-like protein 9 from Arabidopsis thaliana (Mouse-ear cress).